The sequence spans 205 residues: Urease accessory protein UreG (205 aa).

11 to 18 (GPVGSGKT) is a binding site for GTP.

The protein belongs to the SIMIBI class G3E GTPase family. UreG subfamily. As to quaternary structure, homodimer. UreD, UreF and UreG form a complex that acts as a GTP-hydrolysis-dependent molecular chaperone, activating the urease apoprotein by helping to assemble the nickel containing metallocenter of UreC. The UreE protein probably delivers the nickel.

It is found in the cytoplasm. Its function is as follows. Facilitates the functional incorporation of the urease nickel metallocenter. This process requires GTP hydrolysis, probably effectuated by UreG. This chain is Urease accessory protein UreG, found in Prochlorococcus marinus (strain NATL1A).